A 486-amino-acid polypeptide reads, in one-letter code: Membrane-bound lytic murein transglycosylase F (486 aa).

An N-terminal signal peptide occupies residues 1 to 21 (MKRLKINYILIGVVTLLLALA). Residues 22–268 (LWPNITWRGG…RLEEKYLGHV (247 aa)) form a non-LT domain region. Residues 269-486 (GSFDYVDTKT…AVTPELALNF (218 aa)) are LT domain. Glutamate 313 is a catalytic residue.

It in the N-terminal section; belongs to the bacterial solute-binding protein 3 family. The protein in the C-terminal section; belongs to the transglycosylase Slt family.

Its subcellular location is the cell outer membrane. The enzyme catalyses Exolytic cleavage of the (1-&gt;4)-beta-glycosidic linkage between N-acetylmuramic acid (MurNAc) and N-acetylglucosamine (GlcNAc) residues in peptidoglycan, from either the reducing or the non-reducing ends of the peptidoglycan chains, with concomitant formation of a 1,6-anhydrobond in the MurNAc residue.. In terms of biological role, murein-degrading enzyme that degrades murein glycan strands and insoluble, high-molecular weight murein sacculi, with the concomitant formation of a 1,6-anhydromuramoyl product. Lytic transglycosylases (LTs) play an integral role in the metabolism of the peptidoglycan (PG) sacculus. Their lytic action creates space within the PG sacculus to allow for its expansion as well as for the insertion of various structures such as secretion systems and flagella. The sequence is that of Membrane-bound lytic murein transglycosylase F from Serratia proteamaculans (strain 568).